Reading from the N-terminus, the 106-residue chain is Large ribosomal subunit protein uL24 (106 aa).

This sequence belongs to the universal ribosomal protein uL24 family. Part of the 50S ribosomal subunit.

Its function is as follows. One of two assembly initiator proteins, it binds directly to the 5'-end of the 23S rRNA, where it nucleates assembly of the 50S subunit. In terms of biological role, one of the proteins that surrounds the polypeptide exit tunnel on the outside of the subunit. The protein is Large ribosomal subunit protein uL24 of Parabacteroides distasonis (strain ATCC 8503 / DSM 20701 / CIP 104284 / JCM 5825 / NCTC 11152).